Here is a 149-residue protein sequence, read N- to C-terminus: Putative mediator of RNA polymerase II transcription subunit 22 (149 aa).

This sequence belongs to the Mediator complex subunit 22 family. As to quaternary structure, component of the Mediator complex.

It localises to the nucleus. Its function is as follows. Component of the Mediator complex, a coactivator involved in the regulated transcription of nearly all RNA polymerase II-dependent genes. Mediator functions as a bridge to convey information from gene-specific regulatory proteins to the basal RNA polymerase II transcription machinery. Mediator is recruited to promoters by direct interactions with regulatory proteins and serves as a scaffold for the assembly of a functional preinitiation complex with RNA polymerase II and the general transcription factors. The chain is Putative mediator of RNA polymerase II transcription subunit 22 (med22) from Dictyostelium discoideum (Social amoeba).